Here is a 119-residue protein sequence, read N- to C-terminus: Holo-[acyl-carrier-protein] synthase (119 aa).

Residues Asp-8 and Glu-58 each coordinate Mg(2+).

Belongs to the P-Pant transferase superfamily. AcpS family. Mg(2+) serves as cofactor.

The protein localises to the cytoplasm. The enzyme catalyses apo-[ACP] + CoA = holo-[ACP] + adenosine 3',5'-bisphosphate + H(+). Functionally, transfers the 4'-phosphopantetheine moiety from coenzyme A to a Ser of acyl-carrier-protein. This is Holo-[acyl-carrier-protein] synthase from Bacillus mycoides (strain KBAB4) (Bacillus weihenstephanensis).